An 889-amino-acid chain; its full sequence is Exocyst complex component 1 (889 aa).

A phosphoserine mark is found at Ser145 and Ser148. Residues 156–269 (RAVQKTQHMD…GHVKETMEKI (114 aa)) adopt a coiled-coil conformation. Residue Ser456 is modified to Phosphoserine.

This sequence belongs to the SEC3 family. The exocyst complex is composed of Sec3/Exoc1, Sec5/Exoc2, Sec6/Exoc3, Sec8/Exoc4, Sec10/Exoc5, Sec15/Exoc6, Exo70/Exoc7 and Exo84/Exoc8.

Its function is as follows. Component of the exocyst complex involved in the docking of exocytic vesicles with fusion sites on the plasma membrane. This is Exocyst complex component 1 from Drosophila melanogaster (Fruit fly).